The sequence spans 265 residues: Homeobox protein CDX-1 (265 aa).

The segment at 9-152 (KDSPVYPGPA…GGGGVSGKTR (144 aa)) is disordered. Positions 30 to 43 (YGPPAPPPAPPQYP) are enriched in pro residues. Residues 73-92 (AAAYGPGPAAPAASPASLAF) are compositionally biased toward low complexity. Pro residues predominate over residues 93–108 (GPPPDFSPVPAPPGPG). Positions 110–126 (GLLAQPLGGPGTPSSPG) are enriched in low complexity. The segment at residues 154–213 (KDKYRVVYTDHQRLELEKEFHYSRYITIRRKSELAANLGLTERQVKIWFQNRRAKERKVN) is a DNA-binding region (homeobox). The segment at 157 to 178 (YRVVYTDHQRLELEKEFHYSRY) is interaction with DNA. Positions 196 to 207 (RQVKIWFQNRRA) are interaction with 5-mCpG DNA. Positions 206 to 217 (RAKERKVNKKKQ) are enriched in basic residues. Positions 206–265 (RAKERKVNKKKQQQQQPPQPPTAHDITATPARPSLGGLCPSNTSLLATSSPMPVKEEFLP) are disordered. Over residues 245 to 256 (PSNTSLLATSSP) the composition is skewed to polar residues.

It belongs to the Caudal homeobox family.

The protein localises to the nucleus. Functionally, plays a role in transcriptional regulation. Involved in activated KRAS-mediated transcriptional activation of PRKD1 in colorectal cancer (CRC) cells. Binds to the PRKD1 promoter in colorectal cancer (CRC) cells. Could play a role in the terminal differentiation of the intestine. Binds preferentially to methylated DNA. This Pongo pygmaeus (Bornean orangutan) protein is Homeobox protein CDX-1 (CDX1).